The following is a 302-amino-acid chain: Pathogenicity locus probable regulatory protein HrpS (302 aa).

Residues 9-237 form the Sigma-54 factor interaction domain; that stretch reads DDLDEERVPN…LKAAAKRHVL (229 aa). ATP contacts are provided by residues 37–44 and 99–108; these read GETGTGKD and AQGGTLYLDE. A DNA-binding region (H-T-H motif) is located at residues 279–298; that stretch reads IDAASLELDMPRRTLYRRIK.

Member of the two-component regulatory system HrpR/HrpS that regulates the activation of the sigma factor hrpL which itself induces the expression of hprD as well as other hrp loci which are involved in plant pathogenicity, hrmA and avr genes. Probably interacts with sigma-54. This Pseudomonas savastanoi pv. phaseolicola (Pseudomonas syringae pv. phaseolicola) protein is Pathogenicity locus probable regulatory protein HrpS (hrpS).